The sequence spans 95 residues: Aspartyl/glutamyl-tRNA(Asn/Gln) amidotransferase subunit C (95 aa).

The protein belongs to the GatC family. As to quaternary structure, heterotrimer of A, B and C subunits.

The enzyme catalyses L-glutamyl-tRNA(Gln) + L-glutamine + ATP + H2O = L-glutaminyl-tRNA(Gln) + L-glutamate + ADP + phosphate + H(+). It catalyses the reaction L-aspartyl-tRNA(Asn) + L-glutamine + ATP + H2O = L-asparaginyl-tRNA(Asn) + L-glutamate + ADP + phosphate + 2 H(+). Its function is as follows. Allows the formation of correctly charged Asn-tRNA(Asn) or Gln-tRNA(Gln) through the transamidation of misacylated Asp-tRNA(Asn) or Glu-tRNA(Gln) in organisms which lack either or both of asparaginyl-tRNA or glutaminyl-tRNA synthetases. The reaction takes place in the presence of glutamine and ATP through an activated phospho-Asp-tRNA(Asn) or phospho-Glu-tRNA(Gln). This chain is Aspartyl/glutamyl-tRNA(Asn/Gln) amidotransferase subunit C, found in Hydrogenovibrio crunogenus (strain DSM 25203 / XCL-2) (Thiomicrospira crunogena).